A 385-amino-acid chain; its full sequence is Putative 8-amino-7-oxononanoate synthase (385 aa).

Arg-21 contributes to the substrate binding site. Gly-108–Tyr-109 contacts pyridoxal 5'-phosphate. His-133 provides a ligand contact to substrate. Pyridoxal 5'-phosphate is bound by residues Ser-182, Asp-207 to His-210, and Thr-234 to Lys-237. An N6-(pyridoxal phosphate)lysine modification is found at Lys-237. Ser-351 contributes to the substrate binding site.

Belongs to the class-II pyridoxal-phosphate-dependent aminotransferase family. BioF subfamily. As to quaternary structure, homodimer. Pyridoxal 5'-phosphate serves as cofactor.

It carries out the reaction 6-carboxyhexanoyl-[ACP] + L-alanine + H(+) = (8S)-8-amino-7-oxononanoate + holo-[ACP] + CO2. Its pathway is cofactor biosynthesis; biotin biosynthesis. Functionally, catalyzes the decarboxylative condensation of pimeloyl-[acyl-carrier protein] and L-alanine to produce 8-amino-7-oxononanoate (AON), [acyl-carrier protein], and carbon dioxide. This chain is Putative 8-amino-7-oxononanoate synthase (bioF), found in Desulfosudis oleivorans (strain DSM 6200 / JCM 39069 / Hxd3) (Desulfococcus oleovorans).